Reading from the N-terminus, the 479-residue chain is Nucleoside-diphosphatase uda-1 (479 aa).

At 1–7 the chain is on the cytoplasmic side; it reads MLFPAFS. A helical; Signal-anchor for type II membrane protein transmembrane segment spans residues 8-24; that stretch reads ILLISFFSLLSVVTTKT. Residues 25–479 lie on the Lumenal side of the membrane; the sequence is QYWCHGDGVL…VLSYFNIISV (455 aa). Glu171 acts as the Proton acceptor in catalysis. Residues Asn300 and Asn452 are each glycosylated (N-linked (GlcNAc...) asparagine).

It belongs to the GDA1/CD39 NTPase family. Ca(2+) is required as a cofactor. The cofactor is Mg(2+). It depends on Mn(2+) as a cofactor.

It localises to the endomembrane system. The catalysed reaction is a ribonucleoside 5'-diphosphate + H2O = a ribonucleoside 5'-phosphate + phosphate + H(+). In terms of biological role, hydrolyzes UDP and GDP but not any other nucleoside di-, mono- or triphosphates. May promote reglycosylation reactions involved in glycoproteins folding and quality control in the endoplasmic reticulum. The sequence is that of Nucleoside-diphosphatase uda-1 (uda-1) from Caenorhabditis elegans.